We begin with the raw amino-acid sequence, 338 residues long: Nuclear hormone receptor family member nhr-52 (338 aa).

The nuclear receptor DNA-binding region spans 1 to 75 (MKCLVCCSYA…IGMRFSEPKQ (75 aa)). NR C4-type zinc fingers lie at residues 3–23 (CLVC…CSAC) and 39–63 (CKYD…FKKC). The 240-residue stretch at 98-337 (KDGVHYSNFL…KKLVNDIIIR (240 aa)) folds into the NR LBD domain.

The protein belongs to the nuclear hormone receptor family.

The protein localises to the nucleus. In terms of biological role, orphan nuclear receptor. The chain is Nuclear hormone receptor family member nhr-52 (nhr-52) from Caenorhabditis elegans.